The chain runs to 51 residues: Basic phospholipase A2 homolog BmatTX-I (51 aa).

Cysteine 28 and cysteine 44 are disulfide-bonded.

Monomer. Expressed by the venom gland.

The protein resides in the secreted. Its function is as follows. Snake venom phospholipase A2 homolog that lacks enzymatic activity. Shows high myotoxic activity, neutrophile activation (demonstrated by activation induction of IL-1beta production), slight cytotoxicity against Jurkat (leukemia T) and SK-BR-3 (breast adenocarcinoma) tumor cell lines, and slight antiparasitic activity against promastigote forms of Leishmania amazonensis. A model of myotoxic mechanism has been proposed: an apo Lys49-PLA2 is activated by the entrance of a hydrophobic molecule (e.g. fatty acid) at the hydrophobic channel of the protein leading to a reorientation of a monomer. This reorientation causes a transition between 'inactive' to 'active' states, causing alignment of C-terminal and membrane-docking sites (MDoS) side-by-side and putting the membrane-disruption sites (MDiS) in the same plane, exposed to solvent and in a symmetric position for both monomers. The MDoS region stabilizes the toxin on membrane by the interaction of charged residues with phospholipid head groups. Subsequently, the MDiS region destabilizes the membrane with penetration of hydrophobic residues. This insertion causes a disorganization of the membrane, allowing an uncontrolled influx of ions (i.e. calcium and sodium), and eventually triggering irreversible intracellular alterations and cell death. The sequence is that of Basic phospholipase A2 homolog BmatTX-I from Bothrops mattogrossensis (Pitviper).